The chain runs to 420 residues: Protein disulfide isomerase Creld1 (420 aa).

The signal sequence occupies residues 1-29; that stretch reads MAPLPPRGLVPSLLWCLSLFLSLPGPVWL. Residues 30-362 are Extracellular-facing; that stretch reads QPSPPPHPSP…GFFAEMTEDE (333 aa). Positions 46–49 match the CXXC motif; that stretch reads CHTC. Intrachain disulfides connect Cys46/Cys49, Cys155/Cys169, Cys163/Cys181, and Cys183/Cys192. In terms of domain architecture, EGF-like 1 spans 153–193; the sequence is LPCPGGTERPCGGYGQCEGEGTRGGSGHCDCQAGYGGEACG. An N-linked (GlcNAc...) asparagine glycan is attached at Asn205. 2 FU repeats span residues 208–255 and 268–315; these read HLVC…EQAT and SYEC…VVCP. The CXXC signature appears at 278–281; that stretch reads CLGC. 4 disulfides stabilise this stretch: Cys278–Cys281, Cys309–Cys321, Cys314–Cys330, and Cys332–Cys343. The EGF-like 2; calcium-binding domain occupies 305 to 342; sequence DVDECETVVCPGENEKCENTEGGYRCVCAEGYRQEDGI. Residues 363–383 traverse the membrane as a helical segment; that stretch reads MVVLQQMFFGVIICALATLAA. Lys384 is a topological domain (cytoplasmic). Residues 385 to 405 traverse the membrane as a helical segment; it reads GDLVFTAIFIGAVAAMTGYWL. At 406–420 the chain is on the extracellular side; sequence SERSDRVLEGFIKGR.

Belongs to the CRELD family. Expressed in myoblast C2C12 cells (at protein level).

Its subcellular location is the membrane. The enzyme catalyses Catalyzes the rearrangement of -S-S- bonds in proteins.. In terms of biological role, protein disulfide isomerase. Promotes the localization of acetylcholine receptors (AChRs) to the plasma membrane. The polypeptide is Protein disulfide isomerase Creld1 (Creld1) (Mus musculus (Mouse)).